Here is an 876-residue protein sequence, read N- to C-terminus: Eukaryotic translation initiation factor 3 subunit C (876 aa).

2 disordered regions span residues 1-25 (MSRF…VVRA) and 154-233 (SXFR…IREQ). Acidic residues predominate over residues 11–20 (SESESSSEDE). Composition is skewed to basic and acidic residues over residues 154–172 (SXFR…KDSS) and 182–192 (KPIKEKPKPEP). Residues 206–219 (SMDWASSSSDSSFS) are compositionally biased toward low complexity. In terms of domain architecture, PCI spans 632-808 (FHMHINLELL…ECAILHRSEP (177 aa)). The interval 839–876 (FFQRGGAQRGEGRQRERPREGWNRRTRNRRRDDERADD) is disordered. The segment covering 848–861 (GEGRQRERPREGWN) has biased composition (basic and acidic residues).

The protein belongs to the eIF-3 subunit C family. In terms of assembly, component of the eukaryotic translation initiation factor 3 (eIF-3) complex.

Its subcellular location is the cytoplasm. Its function is as follows. Component of the eukaryotic translation initiation factor 3 (eIF-3) complex, which is involved in protein synthesis of a specialized repertoire of mRNAs and, together with other initiation factors, stimulates binding of mRNA and methionyl-tRNAi to the 40S ribosome. The eIF-3 complex specifically targets and initiates translation of a subset of mRNAs involved in cell proliferation. The polypeptide is Eukaryotic translation initiation factor 3 subunit C (Bombyx mori (Silk moth)).